A 379-amino-acid chain; its full sequence is Chaperone protein DnaJ (379 aa).

One can recognise a J domain in the interval 5-70 (DYYEVLGVSR…QKRAAYDQYG (66 aa)). The segment at 134-212 (GVTKEIRIPT…CHGHGRVEKS (79 aa)) adopts a CR-type zinc-finger fold. 8 residues coordinate Zn(2+): C147, C150, C164, C167, C186, C189, C200, and C203. CXXCXGXG motif repeat units lie at residues 147-154 (CDVCHGSG), 164-171 (CPTCHGAG), 186-193 (CPHCHGRG), and 200-207 (CNKCHGHG).

Belongs to the DnaJ family. In terms of assembly, homodimer. Zn(2+) is required as a cofactor.

Its subcellular location is the cytoplasm. Participates actively in the response to hyperosmotic and heat shock by preventing the aggregation of stress-denatured proteins and by disaggregating proteins, also in an autonomous, DnaK-independent fashion. Unfolded proteins bind initially to DnaJ; upon interaction with the DnaJ-bound protein, DnaK hydrolyzes its bound ATP, resulting in the formation of a stable complex. GrpE releases ADP from DnaK; ATP binding to DnaK triggers the release of the substrate protein, thus completing the reaction cycle. Several rounds of ATP-dependent interactions between DnaJ, DnaK and GrpE are required for fully efficient folding. Also involved, together with DnaK and GrpE, in the DNA replication of plasmids through activation of initiation proteins. The sequence is that of Chaperone protein DnaJ from Yersinia pseudotuberculosis serotype O:1b (strain IP 31758).